The primary structure comprises 216 residues: 3-isopropylmalate dehydratase small subunit 2 (216 aa).

The protein belongs to the LeuD family. LeuD type 1 subfamily. As to quaternary structure, heterodimer of LeuC and LeuD.

It catalyses the reaction (2R,3S)-3-isopropylmalate = (2S)-2-isopropylmalate. The protein operates within amino-acid biosynthesis; L-leucine biosynthesis; L-leucine from 3-methyl-2-oxobutanoate: step 2/4. Functionally, catalyzes the isomerization between 2-isopropylmalate and 3-isopropylmalate, via the formation of 2-isopropylmaleate. The polypeptide is 3-isopropylmalate dehydratase small subunit 2 (Bordetella pertussis (strain Tohama I / ATCC BAA-589 / NCTC 13251)).